A 532-amino-acid chain; its full sequence is BTB/POZ domain-containing protein 3 (532 aa).

The segment at 23-54 (KNRSKKSSKKTNTGGGGGGSSSSSSSSSNSKL) is disordered. Low complexity predominate over residues 43 to 53 (SSSSSSSSNSK). The region spanning 130-200 (ADVHFVVGPP…IYCDEIDLAA (71 aa)) is the BTB domain. Positions 245-310 (FEEPDLTQRC…NWAEVECQRQ (66 aa)) constitute a BACK domain.

Expressed in visual cortex. Expressed in visual cortex layer IV neurons.

It is found in the cytoplasm. The protein resides in the cytosol. Its subcellular location is the nucleus. Its function is as follows. Acts as a key regulator of dendritic field orientation during development of sensory cortex. Also directs dendrites toward active axon terminals when ectopically expressed. The polypeptide is BTB/POZ domain-containing protein 3 (BTBD3) (Mustela putorius furo (European domestic ferret)).